A 216-amino-acid chain; its full sequence is Ribosomal RNA small subunit methyltransferase G (216 aa).

3 residues coordinate S-adenosyl-L-methionine: G75, L80, and R141.

The protein belongs to the methyltransferase superfamily. RNA methyltransferase RsmG family.

The protein localises to the cytoplasm. It carries out the reaction guanosine(527) in 16S rRNA + S-adenosyl-L-methionine = N(7)-methylguanosine(527) in 16S rRNA + S-adenosyl-L-homocysteine. In terms of biological role, specifically methylates the N7 position of guanine in position 527 of 16S rRNA. In Nitrosospira multiformis (strain ATCC 25196 / NCIMB 11849 / C 71), this protein is Ribosomal RNA small subunit methyltransferase G.